Reading from the N-terminus, the 252-residue chain is 14-3-3 protein 10 (252 aa).

Belongs to the 14-3-3 family. In terms of assembly, homodimer.

In Solanum lycopersicum (Tomato), this protein is 14-3-3 protein 10 (TFT10).